The sequence spans 203 residues: Probable deoxycytidylate deaminase (203 aa).

Residues 27–163 (HWDDYFMATS…PTYRASKRML (137 aa)) enclose the CMP/dCMP-type deaminase domain. Position 102 (His102) interacts with Zn(2+). Glu104 functions as the Proton donor in the catalytic mechanism. Zn(2+) is bound by residues Cys128 and Cys131.

Belongs to the cytidine and deoxycytidylate deaminase family. Zn(2+) serves as cofactor.

The catalysed reaction is dCMP + H2O + H(+) = dUMP + NH4(+). Functionally, supplies the nucleotide substrate for thymidylate synthetase. This Drosophila melanogaster (Fruit fly) protein is Probable deoxycytidylate deaminase.